A 136-amino-acid chain; its full sequence is Large ribosomal subunit protein uL16 (136 aa).

Belongs to the universal ribosomal protein uL16 family. Part of the 50S ribosomal subunit.

Its function is as follows. Binds 23S rRNA and is also seen to make contacts with the A and possibly P site tRNAs. This is Large ribosomal subunit protein uL16 from Rickettsia africae (strain ESF-5).